A 534-amino-acid chain; its full sequence is MKEKLMRCIIERILKEYKEGKTLDKKRIEQIKSECLRIYRIGIGHPSNSEILKYATEEEKKILIPILRKKPVRTISGVAVVAVMTSPAKCPHGKCIFCPGGLDSVFGDVPQSYTGREPATMRGLMFNFDPYLQTRARIEQLEKVGHPTDKIELIIMGGTFPAREIEYQDWFIKRCLDAMNERESKSLEEAQKINETAKHRCVALCIETRPDYCSEKEINQMLKLGATRVELGVQSIYNEILKLCKRGHSVEDTIKATQLLKDSGLKVSYHLMPGMPGSSIEMDKKMFKEIFTNPDFMPDMVKIYPCLVIEGTELYEMWKRGEFKPYREEEAIEVISYAKSIMPKWVRTSRIQRDIPATVIVDGVKKSNLGELVYKYMEKKGLRCRCIRCREVGHVYYKKGILPDPEHIKLVREDYEASGGTEIFLSFEDVKNDILIAFLRLRDPYKPFRKEIDDKTMLVRQLHVFGWEKALTRDIKEVSWQHMGYGRMLMKEAERIAKEEFGKKKILVTSGIGVREYYRKLGYKRVGAYMGKEL.

The tract at residues 70 to 330 (KPVRTISGVA…GEFKPYREEE (261 aa)) is radical S-adenosyl-L-methionine (rSAM). A Radical SAM core domain is found at 73-344 (RTISGVAVVA…ISYAKSIMPK (272 aa)). [4Fe-4S] cluster contacts are provided by cysteine 90, cysteine 95, and cysteine 98. Lysine 150 contributes to the acetyl-CoA binding site. A disulfide bridge links cysteine 384 with cysteine 389. One can recognise an N-acetyltransferase domain in the interval 387-534 (IRCREVGHVY…RVGAYMGKEL (148 aa)). Acetyl-CoA-binding positions include 461–464 (QLHV), 485–487 (YGR), and tyrosine 518.

The protein belongs to the ELP3 family. The cofactor is [4Fe-4S] cluster.

The enzyme catalyses uridine(34) in tRNA + acetyl-CoA + S-adenosyl-L-methionine + H2O = 5-(carboxymethyl)uridine(34) in tRNA + 5'-deoxyadenosine + L-methionine + CoA + 2 H(+). It participates in tRNA modification. In terms of biological role, tRNA uridine(34) acetyltransferase, which mediates formation of carboxymethyluridine in the wobble base at position 34 in tRNAs. The proposed mechanism is the following: (i) recruits S-adenosyl-L-methionine and cleaves it to generate a 5'-deoxyadenosine radical (5'-dA) in the radical S-adenosyl-L-methionine (rSAM) region, (ii) hydrolyzes acetyl-CoA in the N-acetyltransferase domain and (iii) an acetyl radical is formed by the products of the two domains and (iv) is transferred onto the C5 position of uridine(34) in the bound tRNA molecule. Does not show protein lysine acetyltransferase activity. The polypeptide is tRNA uridine(34) acetyltransferase (Methanocaldococcus infernus (strain DSM 11812 / JCM 15783 / ME)).